The primary structure comprises 300 residues: Ribonuclease HIII (300 aa).

The 218-residue stretch at 83-300 (IPIIGSDEVG…THKAQALLTK (218 aa)) folds into the RNase H type-2 domain. Residues aspartate 89, glutamate 90, and aspartate 194 each coordinate a divalent metal cation.

It belongs to the RNase HII family. RnhC subfamily. It depends on Mn(2+) as a cofactor. Mg(2+) serves as cofactor.

Its subcellular location is the cytoplasm. It catalyses the reaction Endonucleolytic cleavage to 5'-phosphomonoester.. Functionally, endonuclease that specifically degrades the RNA of RNA-DNA hybrids. This chain is Ribonuclease HIII, found in Streptococcus pyogenes serotype M49 (strain NZ131).